A 71-amino-acid chain; its full sequence is AKMNLSSYILILTFSLFSQGILLSASKSIRNLDDDMVFNTFRLGKAFQKEDTAEKSVIAPSLEQYKSDESS.

The first 20 residues, 1–20 (AKMNLSSYILILTFSLFSQG), serve as a signal peptide directing secretion.

This sequence belongs to the melanin-concentrating hormone family.

The protein resides in the secreted. The protein is Pro-MCH (PMCH) of Hylobates lar (Lar gibbon).